Consider the following 96-residue polypeptide: MAKGQSLQDPYLNALRRERIPVSIYLVNGIKLQGQIESFDQFVILLKNTVNQMVYKHAISTVVPARSVSHHNSVQHHHIVQTQEMQVEALAENQTE.

The Sm domain maps to Asp-9–Val-68.

It belongs to the Hfq family. In terms of assembly, homohexamer.

Functionally, RNA chaperone that binds small regulatory RNA (sRNAs) and mRNAs to facilitate mRNA translational regulation in response to envelope stress, environmental stress and changes in metabolite concentrations. Also binds with high specificity to tRNAs. The protein is RNA-binding protein Hfq of Histophilus somni (strain 129Pt) (Haemophilus somnus).